Here is a 624-residue protein sequence, read N- to C-terminus: Chaperone protein HtpG (624 aa).

The segment at 1-336 is a; substrate-binding; it reads MKGQETRGFQ…SNDLPLNVSR (336 aa). A b region spans residues 337–552; sequence EILQDSTVTR…ADEMSTQMAK (216 aa). Positions 553–624 are c; it reads LFAAAGQSVP…IRRMNQLLVS (72 aa).

This sequence belongs to the heat shock protein 90 family. Homodimer.

It localises to the cytoplasm. Functionally, molecular chaperone. Has ATPase activity. In Salmonella paratyphi A (strain ATCC 9150 / SARB42), this protein is Chaperone protein HtpG.